The chain runs to 624 residues: ATP-dependent zinc metalloprotease FtsH (624 aa).

The Cytoplasmic segment spans residues 1-7 (MPRAPFS). A helical transmembrane segment spans residues 8 to 28 (LLALVLGLAFLAWAFSLAGTV). Over 29–103 (GAPSGTVNYT…VRVEPPQGQN (75 aa)) the chain is Periplasmic. The helical transmembrane segment at 104 to 124 (ALGFLWPLLLVGLLIGALYYF) threads the bilayer. Residues 125–624 (SRNGRAGPSD…VKPGGALGGA (500 aa)) lie on the Cytoplasmic side of the membrane. Residues A159, 199 to 203 (GVGKT), and H204 contribute to the ATP site. H418 contributes to the Zn(2+) binding site. Residue E419 is part of the active site. The Zn(2+) site is built by H422 and D493. Positions 595-624 (PLEAPEEAREEREPPRVVPKVKPGGALGGA) are disordered. The span at 600 to 609 (EEAREEREPP) shows a compositional bias: basic and acidic residues.

The protein in the central section; belongs to the AAA ATPase family. In the C-terminal section; belongs to the peptidase M41 family. The isolated soluble domain (residues 126-624) forms a stable hexamer in which the AAA+ domains (residues 126-400) are alternatively open or closed. The cofactor is Zn(2+).

It is found in the cell inner membrane. The proteolytic activity is dependent on ATP, both the ATPase and protease activities are inhibited by ADP. In terms of biological role, acts as a processive, ATP-dependent zinc metallopeptidase for both cytoplasmic and membrane proteins. Plays a role in the quality control of integral membrane proteins. Its function is as follows. Degrades preferentially unfolded substrates in a processive, ATP-dependent manner, usually after hydrophobic residues. The chain is ATP-dependent zinc metalloprotease FtsH from Thermus thermophilus (strain ATCC 27634 / DSM 579 / HB8).